Consider the following 1183-residue polypeptide: PAN2-PAN3 deadenylation complex catalytic subunit PAN2 (1183 aa).

The tract at residues 1-24 (MDGWTEISRIAATTQPPKGPSPHI) is disordered. WD repeat units lie at residues 159–207 (DLNK…SIKS), 269–309 (PFPA…NVFL), and 327–366 (SKAP…STIT). Residues 369-520 (FVNFPASIEQ…FQYKVPLSRK (152 aa)) form a linker region. The USP domain maps to 521–919 (KIPNCYSRLQ…KPVILVYHDS (399 aa)). Residues 977 to 1151 (IAIDAEFVNL…EDAYTALLLY (175 aa)) form the Exonuclease domain. A divalent metal cation is bound by residues D980, E982, D1090, and D1143.

The protein belongs to the peptidase C19 family. PAN2 subfamily. Forms a heterotrimer with an asymmetric homodimer of the regulatory subunit PAN3 to form the poly(A)-nuclease (PAN) deadenylation complex. It depends on a divalent metal cation as a cofactor.

It is found in the cytoplasm. The enzyme catalyses Exonucleolytic cleavage of poly(A) to 5'-AMP.. With respect to regulation, positively regulated by the regulatory subunit PAN3. In terms of biological role, catalytic subunit of the poly(A)-nuclease (PAN) deadenylation complex, one of two cytoplasmic mRNA deadenylases involved in mRNA turnover. PAN specifically shortens poly(A) tails of RNA and the activity is stimulated by poly(A)-binding protein PAB1. PAN deadenylation is followed by rapid degradation of the shortened mRNA tails by the CCR4-NOT complex. Deadenylated mRNAs are then degraded by two alternative mechanisms, namely exosome-mediated 3'-5' exonucleolytic degradation, or deadenylation-dependent mRNA decaping and subsequent 5'-3' exonucleolytic degradation by XRN1. May also be involved in post-transcriptional maturation of mRNA poly(A) tails. The polypeptide is PAN2-PAN3 deadenylation complex catalytic subunit PAN2 (Scheffersomyces stipitis (strain ATCC 58785 / CBS 6054 / NBRC 10063 / NRRL Y-11545) (Yeast)).